The sequence spans 95 residues: Cobalt transport protein CbiN (95 aa).

A run of 2 helical transmembrane segments spans residues histidine 5 to glycine 25 and leucine 67 to tyrosine 87.

Belongs to the CbiN family. Forms an energy-coupling factor (ECF) transporter complex composed of an ATP-binding protein (A component, CbiO), a transmembrane protein (T component, CbiQ) and 2 possible substrate-capture proteins (S components, CbiM and CbiN) of unknown stoichimetry.

It is found in the cell membrane. The protein operates within cofactor biosynthesis; adenosylcobalamin biosynthesis. Its function is as follows. Part of the energy-coupling factor (ECF) transporter complex CbiMNOQ involved in cobalt import. The polypeptide is Cobalt transport protein CbiN (Methanothermobacter thermautotrophicus (strain ATCC 29096 / DSM 1053 / JCM 10044 / NBRC 100330 / Delta H) (Methanobacterium thermoautotrophicum)).